The sequence spans 89 residues: Large ribosomal subunit protein eL31 (89 aa).

The protein belongs to the eukaryotic ribosomal protein eL31 family.

The protein is Large ribosomal subunit protein eL31 (rpl31e) of Thermoplasma acidophilum (strain ATCC 25905 / DSM 1728 / JCM 9062 / NBRC 15155 / AMRC-C165).